The sequence spans 612 residues: MEVFGDLDKVDDAECVEVDPTRRYIRYNEVLGRGAMKTVYKAFDEVEGIEVAWSQVEIDEVMQSPDNLERLYSEVHLLKSLKHENVMKFYNYWVDDQKKTINVITELFTSGSLRQYRQKHPRVDLKAIKNWARQVLRGLDYLHTHQPPIIHRDLKCDNIFVNGNHGEVKIGDLGLATVMLTPRAKSVIGTPEFMAPELYDENYDELVDIYSFGMCMLEMFTLEYPYSECTNAAQIFKKVSKGVKPAALAKITNIQAKQFIDKCLVPASERLSAKELLQDPFLCSDNSSVLVGTKFPSSLPKSVDVSLEALHMDVDTNESMCTSTCKRNDLGGPHRSVLEFTRTNKNTELKLTGEKLDDNSVSLVLRIADLCGHARNIHFLFYLDSDTAMSVAAEMVEQLELADCDVTFIADFIDLLIVNLVPGQQLMNDAVMSTSSESKMGESEHVITSQQHPSELTHDYVLVEGMMHSKEANASPSDYIDSLLNATNLGGPNSSEGSDISVQLDGSSKSLSEYGVDEYRTLECGAYKGTDKLGCRHPLSNGSSNFAIFQMDQASHHSELVIGASVSITENRDVLNGELGLIEAQYEQWFRELTRMREEALEGARKKWLPDK.

One can recognise a Protein kinase domain in the interval 25–282 (IRYNEVLGRG…AKELLQDPFL (258 aa)). Residues 105-108 (TELF) and lysine 155 each bind ATP. Aspartate 172 functions as the Proton acceptor in the catalytic mechanism.

The protein belongs to the protein kinase superfamily. Ser/Thr protein kinase family. WNK subfamily.

It catalyses the reaction L-seryl-[protein] + ATP = O-phospho-L-seryl-[protein] + ADP + H(+). It carries out the reaction L-threonyl-[protein] + ATP = O-phospho-L-threonyl-[protein] + ADP + H(+). The protein is Probable serine/threonine-protein kinase WNK4 (WNK4) of Oryza sativa subsp. japonica (Rice).